The primary structure comprises 394 residues: Elongation factor Tu (394 aa).

Residues 10–204 form the tr-type G domain; sequence KPHVNIGTIG…AVDSYIPQPI (195 aa). A G1 region spans residues 19–26; the sequence is GHVDHGKT. Position 19–26 (19–26) interacts with GTP; the sequence is GHVDHGKT. T26 lines the Mg(2+) pocket. A G2 region spans residues 60–64; sequence GITIS. The interval 81–84 is G3; it reads DCPG. Residues 81-85 and 136-139 each bind GTP; these read DCPGH and NKVD. The G4 stretch occupies residues 136–139; that stretch reads NKVD. The segment at 174–176 is G5; sequence SAL.

Belongs to the TRAFAC class translation factor GTPase superfamily. Classic translation factor GTPase family. EF-Tu/EF-1A subfamily. As to quaternary structure, monomer.

Its subcellular location is the cytoplasm. It catalyses the reaction GTP + H2O = GDP + phosphate + H(+). Its function is as follows. GTP hydrolase that promotes the GTP-dependent binding of aminoacyl-tRNA to the A-site of ribosomes during protein biosynthesis. This Rickettsia typhi (strain ATCC VR-144 / Wilmington) protein is Elongation factor Tu.